The following is a 318-amino-acid chain: Aspartate carbamoyltransferase catalytic subunit (318 aa).

Arginine 55 and threonine 56 together coordinate carbamoyl phosphate. An L-aspartate-binding site is contributed by lysine 83. Residues arginine 105, histidine 138, and glutamine 141 each coordinate carbamoyl phosphate. Residues arginine 171 and arginine 225 each contribute to the L-aspartate site. Carbamoyl phosphate is bound by residues glycine 266 and proline 267.

The protein belongs to the aspartate/ornithine carbamoyltransferase superfamily. ATCase family. Heterododecamer (2C3:3R2) of six catalytic PyrB chains organized as two trimers (C3), and six regulatory PyrI chains organized as three dimers (R2).

The enzyme catalyses carbamoyl phosphate + L-aspartate = N-carbamoyl-L-aspartate + phosphate + H(+). Its pathway is pyrimidine metabolism; UMP biosynthesis via de novo pathway; (S)-dihydroorotate from bicarbonate: step 2/3. In terms of biological role, catalyzes the condensation of carbamoyl phosphate and aspartate to form carbamoyl aspartate and inorganic phosphate, the committed step in the de novo pyrimidine nucleotide biosynthesis pathway. This chain is Aspartate carbamoyltransferase catalytic subunit, found in Corynebacterium kroppenstedtii (strain DSM 44385 / JCM 11950 / CIP 105744 / CCUG 35717).